The sequence spans 446 residues: Forkhead box protein F2 (446 aa).

Residues 1–18 (MSTEGGPPPPPPRPPPAP) are compositionally biased toward pro residues. Positions 1 to 97 (MSTEGGPPPP…TKKATSGLRR (97 aa)) are disordered. Residues 45–78 (STSSSSSSSSASCASSSSNSVSASAGACKSAASS) are compositionally biased toward low complexity. The fork-head DNA-binding region spans 100–194 (KPPYSYIALI…EEGSFRRRPR (95 aa)). 3 disordered regions span residues 257–278 (AGAP…HMSP), 304–325 (GGGG…SPAM), and 340–371 (AHWS…GLHP). Residues 263 to 274 (AHPHHLHHHHVP) are compositionally biased toward basic residues. Residues 311 to 325 (GPDSSSSPVPSSPAM) are compositionally biased toward low complexity.

As to quaternary structure, interacts with the transcription factors TBP and TFIIB. As to expression, uniquely expressed in the bronchiolar epithelium and in type II pneumocytes.

The protein resides in the nucleus. In terms of biological role, probable transcription activator for a number of lung-specific genes. Mediates up-regulation of the E3 ligase IRF2BPL and drives ubiquitination and degradation of CTNNB1. This is Forkhead box protein F2 (Foxf2) from Mus musculus (Mouse).